Here is a 427-residue protein sequence, read N- to C-terminus: Glutamate-1-semialdehyde 2,1-aminomutase (427 aa).

K266 is modified (N6-(pyridoxal phosphate)lysine).

Belongs to the class-III pyridoxal-phosphate-dependent aminotransferase family. HemL subfamily. Homodimer. Requires pyridoxal 5'-phosphate as cofactor.

It is found in the cytoplasm. The enzyme catalyses (S)-4-amino-5-oxopentanoate = 5-aminolevulinate. It functions in the pathway porphyrin-containing compound metabolism; protoporphyrin-IX biosynthesis; 5-aminolevulinate from L-glutamyl-tRNA(Glu): step 2/2. This Aromatoleum aromaticum (strain DSM 19018 / LMG 30748 / EbN1) (Azoarcus sp. (strain EbN1)) protein is Glutamate-1-semialdehyde 2,1-aminomutase.